The sequence spans 68 residues: Large ribosomal subunit protein uL29 (68 aa).

Belongs to the universal ribosomal protein uL29 family.

This Rhodopseudomonas palustris (strain BisB18) protein is Large ribosomal subunit protein uL29.